The primary structure comprises 156 residues: Cyanate hydratase (156 aa).

Active-site residues include arginine 96, glutamate 99, and serine 122.

Belongs to the cyanase family.

The catalysed reaction is cyanate + hydrogencarbonate + 3 H(+) = NH4(+) + 2 CO2. Its function is as follows. Catalyzes the reaction of cyanate with bicarbonate to produce ammonia and carbon dioxide. The polypeptide is Cyanate hydratase (Escherichia coli (strain K12 / DH10B)).